Here is a 456-residue protein sequence, read N- to C-terminus: Iroquois-class homeodomain protein irx-2 (456 aa).

The homeobox; TALE-type DNA-binding region spans 110 to 172 (DPAYRKNATR…NARRRLKKEN (63 aa)). 3 disordered regions span residues 172–214 (NKMT…AEDE), 246–320 (CESG…PASK), and 434–456 (RPTNFESKKDPSEVCTVGVQPYP). 2 stretches are compositionally biased toward basic and acidic residues: residues 192–205 (GERVKEEQSEKAQD) and 246–256 (CESGSESKEKY). A compositionally biased stretch (acidic residues) spans 257–269 (DDDEDEEEGDEED). A compositionally biased stretch (polar residues) spans 291 to 318 (NHQQDGSPRNSNKTSLDNGMSPSSQTPA).

It belongs to the TALE/IRO homeobox family. As to expression, expressed in the neural plate in overlapping patterns with other irx members, which all share an anterior border of expression. Also expressed in the placodes. Broadly expressed in the tailbud rhombencephalon (hindbrain). Outside the nervous system and at tailbud stages, expressed in the developing otic vesicle, branchial arches, prospective heart region and pronephros.

The protein resides in the nucleus. Functionally, acts partially redundantly with other irx members in neural patterning. Required for formation of the posterior forebrain, midbrain, hindbrain, and to a lesser extent, spinal cord. Acts early in neural plate development to induce expression of some but not all proneural genes, and specify a neural precursor state. Also up-regulates repressors that prevent neuronal differentiation. Patterns the neuroectoderm in both the anterior/posterior and dorsal/ventral axes. Probably dispensable for pronephric kidney development. The sequence is that of Iroquois-class homeodomain protein irx-2 from Xenopus tropicalis (Western clawed frog).